The chain runs to 313 residues: Olfactory receptor 56A4 (313 aa).

The Extracellular segment spans residues 1–28 (MASPSNDSTAPVSEFLLICFPNFQSWQH). A glycan (N-linked (GlcNAc...) asparagine) is linked at asparagine 6. The chain crosses the membrane as a helical span at residues 29–49 (WLSLPLSLLFLLAMGANTTLL). Over 50–57 (ITIQLEAS) the chain is Cytoplasmic. Residues 58–78 (LHQPLYYLLSLLSLLDIVLCL) form a helical membrane-spanning segment. At 79–102 (TVIPKVLAIFWFDLRSISFPACFL) the chain is on the extracellular side. Cysteine 100 and cysteine 192 are disulfide-bonded. Residues 103 to 123 (QMFIMNSFLTMESCTFMVMAY) traverse the membrane as a helical segment. At 124 to 142 (DRYVAICHPLRYPSIITDQ) the chain is on the cytoplasmic side. The chain crosses the membrane as a helical span at residues 143–163 (FVARAVVFVIARNAFVSLPVP). Topologically, residues 164–199 (MLSARLRYCAGNIIKNCICSNLSVSKLSCDDITFNQ) are extracellular. N-linked (GlcNAc...) asparagine glycosylation is present at asparagine 184. A helical membrane pass occupies residues 200–220 (LYQFVAGWTLLGSDLILIVIS). The Cytoplasmic segment spans residues 221-240 (YSFILKVVLRIKAEGAVAKA). The helical transmembrane segment at 241 to 261 (LSTCGSHFILILFFSTVLLVL) threads the bilayer. Residues 262–276 (VITNLARKRIPPDVP) are Extracellular-facing. Residues 277 to 297 (ILLNILHHLIPPALNPIVYGV) traverse the membrane as a helical segment. Topologically, residues 298–313 (RTKEIKQGIQNLLKRL) are cytoplasmic.

The protein belongs to the G-protein coupled receptor 1 family.

It localises to the cell membrane. In terms of biological role, odorant receptor. This chain is Olfactory receptor 56A4 (OR56A4), found in Homo sapiens (Human).